The sequence spans 127 residues: Biogenesis of lysosome-related organelles complex 1 subunit 2 (127 aa).

The protein belongs to the BLOC1S2 family. In terms of assembly, component of the biogenesis of lysosome-related organelles complex-1 (BLOC-1). Interacts with BLOS1 and SNX1.

The protein localises to the cytoplasm. The protein resides in the endosome. Its function is as follows. Component of the biogenesis of lysosome-related organelles complex-1 (BLOC-1), a complex that mediates the vacuolar degradative transport via the intracellular vesicle trafficking from the endosome to the vacuole. This Arabidopsis thaliana (Mouse-ear cress) protein is Biogenesis of lysosome-related organelles complex 1 subunit 2 (BLOS2).